Reading from the N-terminus, the 88-residue chain is Sec-independent protein translocase protein TatA (88 aa).

A helical transmembrane segment spans residues 4–24 (LSIWHWLIVLAVVLVLFVGGG). Residues 45 to 88 (ADDETMEGSTGSGGHIAPPGPAAGTVQRDASFSGTGRPSGSSTP) form a disordered region. Low complexity predominate over residues 75 to 88 (SFSGTGRPSGSSTP).

The protein belongs to the TatA/E family. In terms of assembly, the Tat system comprises two distinct complexes: a TatABC complex, containing multiple copies of TatA, TatB and TatC subunits, and a separate TatA complex, containing only TatA subunits. Substrates initially bind to the TatABC complex, which probably triggers association of the separate TatA complex to form the active translocon.

The protein localises to the cell inner membrane. Its function is as follows. Part of the twin-arginine translocation (Tat) system that transports large folded proteins containing a characteristic twin-arginine motif in their signal peptide across membranes. TatA could form the protein-conducting channel of the Tat system. This Gluconacetobacter diazotrophicus (strain ATCC 49037 / DSM 5601 / CCUG 37298 / CIP 103539 / LMG 7603 / PAl5) protein is Sec-independent protein translocase protein TatA.